The chain runs to 319 residues: tRNA N6-adenosine threonylcarbamoyltransferase (319 aa).

Residues histidine 110 and histidine 114 each coordinate Fe cation. Residues 132–136, aspartate 165, glycine 178, aspartate 182, and asparagine 271 each bind substrate; that span reads VVSGG. Aspartate 300 contacts Fe cation.

The protein belongs to the KAE1 / TsaD family. Fe(2+) is required as a cofactor.

Its subcellular location is the cytoplasm. It catalyses the reaction L-threonylcarbamoyladenylate + adenosine(37) in tRNA = N(6)-L-threonylcarbamoyladenosine(37) in tRNA + AMP + H(+). In terms of biological role, required for the formation of a threonylcarbamoyl group on adenosine at position 37 (t(6)A37) in tRNAs that read codons beginning with adenine. Is involved in the transfer of the threonylcarbamoyl moiety of threonylcarbamoyl-AMP (TC-AMP) to the N6 group of A37, together with TsaE and TsaB. TsaD likely plays a direct catalytic role in this reaction. The protein is tRNA N6-adenosine threonylcarbamoyltransferase of Mycoplasma capricolum subsp. capricolum (strain California kid / ATCC 27343 / NCTC 10154).